The following is a 324-amino-acid chain: Glyoxylate/hydroxypyruvate reductase B (324 aa).

Residues R237 and E266 contribute to the active site. The active-site Proton donor is H285.

The protein belongs to the D-isomer specific 2-hydroxyacid dehydrogenase family. GhrB subfamily. In terms of assembly, homodimer.

The protein resides in the cytoplasm. The enzyme catalyses glycolate + NADP(+) = glyoxylate + NADPH + H(+). The catalysed reaction is (R)-glycerate + NAD(+) = 3-hydroxypyruvate + NADH + H(+). It catalyses the reaction (R)-glycerate + NADP(+) = 3-hydroxypyruvate + NADPH + H(+). In terms of biological role, catalyzes the NADPH-dependent reduction of glyoxylate and hydroxypyruvate into glycolate and glycerate, respectively. The chain is Glyoxylate/hydroxypyruvate reductase B from Salmonella paratyphi B (strain ATCC BAA-1250 / SPB7).